The chain runs to 343 residues: Holliday junction branch migration complex subunit RuvB (343 aa).

The interval 1–186 is large ATPase domain (RuvB-L); the sequence is MTEEFDIRQE…FGINLHLEYY (186 aa). ATP is bound by residues Leu25, Arg26, Gly67, Lys70, Thr71, Thr72, 133–135, Arg176, Tyr186, and Arg223; that span reads EDY. Mg(2+) is bound at residue Thr71. Positions 187–257 are small ATPAse domain (RuvB-S); the sequence is DVHTITGIVE…IACYALEALN (71 aa). The segment at 260–343 is head domain (RuvB-H); the sequence is RYGLDNVDHK…PRPHRPSLFD (84 aa). Residues Arg315 and Arg320 each coordinate DNA.

Belongs to the RuvB family. As to quaternary structure, homohexamer. Forms an RuvA(8)-RuvB(12)-Holliday junction (HJ) complex. HJ DNA is sandwiched between 2 RuvA tetramers; dsDNA enters through RuvA and exits via RuvB. An RuvB hexamer assembles on each DNA strand where it exits the tetramer. Each RuvB hexamer is contacted by two RuvA subunits (via domain III) on 2 adjacent RuvB subunits; this complex drives branch migration. In the full resolvosome a probable DNA-RuvA(4)-RuvB(12)-RuvC(2) complex forms which resolves the HJ.

It is found in the cytoplasm. It carries out the reaction ATP + H2O = ADP + phosphate + H(+). Its function is as follows. The RuvA-RuvB-RuvC complex processes Holliday junction (HJ) DNA during genetic recombination and DNA repair, while the RuvA-RuvB complex plays an important role in the rescue of blocked DNA replication forks via replication fork reversal (RFR). RuvA specifically binds to HJ cruciform DNA, conferring on it an open structure. The RuvB hexamer acts as an ATP-dependent pump, pulling dsDNA into and through the RuvAB complex. RuvB forms 2 homohexamers on either side of HJ DNA bound by 1 or 2 RuvA tetramers; 4 subunits per hexamer contact DNA at a time. Coordinated motions by a converter formed by DNA-disengaged RuvB subunits stimulates ATP hydrolysis and nucleotide exchange. Immobilization of the converter enables RuvB to convert the ATP-contained energy into a lever motion, pulling 2 nucleotides of DNA out of the RuvA tetramer per ATP hydrolyzed, thus driving DNA branch migration. The RuvB motors rotate together with the DNA substrate, which together with the progressing nucleotide cycle form the mechanistic basis for DNA recombination by continuous HJ branch migration. Branch migration allows RuvC to scan DNA until it finds its consensus sequence, where it cleaves and resolves cruciform DNA. This Porphyromonas gingivalis (strain ATCC BAA-308 / W83) protein is Holliday junction branch migration complex subunit RuvB.